We begin with the raw amino-acid sequence, 466 residues long: Asparagine--tRNA ligase (466 aa).

This sequence belongs to the class-II aminoacyl-tRNA synthetase family. Homodimer.

The protein resides in the cytoplasm. It catalyses the reaction tRNA(Asn) + L-asparagine + ATP = L-asparaginyl-tRNA(Asn) + AMP + diphosphate + H(+). This is Asparagine--tRNA ligase from Aeromonas hydrophila subsp. hydrophila (strain ATCC 7966 / DSM 30187 / BCRC 13018 / CCUG 14551 / JCM 1027 / KCTC 2358 / NCIMB 9240 / NCTC 8049).